The chain runs to 227 residues: Urease subunit gamma/beta (227 aa).

The interval 1-101 (MRLTPTERDR…LAVVADPVGG (101 aa)) is urease gamma. Residues 102–227 (GGLGDDAPGA…AACGYLGADR (126 aa)) are urease beta.

It in the N-terminal section; belongs to the urease gamma subunit family. This sequence in the C-terminal section; belongs to the urease beta subunit family. In terms of assembly, heterohexamer of 3 UreC (alpha) and 3 UreAB (gamma/beta) subunits.

Its subcellular location is the cytoplasm. The enzyme catalyses urea + 2 H2O + H(+) = hydrogencarbonate + 2 NH4(+). The protein operates within nitrogen metabolism; urea degradation; CO(2) and NH(3) from urea (urease route): step 1/1. This chain is Urease subunit gamma/beta, found in Streptomyces coelicolor (strain ATCC BAA-471 / A3(2) / M145).